Here is a 101-residue protein sequence, read N- to C-terminus: Small ribosomal subunit protein uS14 (101 aa).

The protein belongs to the universal ribosomal protein uS14 family. In terms of assembly, part of the 30S ribosomal subunit. Contacts proteins S3 and S10.

In terms of biological role, binds 16S rRNA, required for the assembly of 30S particles and may also be responsible for determining the conformation of the 16S rRNA at the A site. This Protochlamydia amoebophila (strain UWE25) protein is Small ribosomal subunit protein uS14.